Here is a 688-residue protein sequence, read N- to C-terminus: ERI1 exoribonuclease 2 (688 aa).

One can recognise an Exonuclease domain in the interval 37 to 226 (LIVVDFESTC…DDSRNTALLA (190 aa)). Mg(2+)-binding residues include aspartate 41, glutamate 43, and aspartate 156. Glutamate 43 acts as the Proton acceptor in catalysis. Residue glutamate 43 coordinates AMP. Histidine 213 serves as the catalytic Proton acceptor. An AMP-binding site is contributed by histidine 213. A Mg(2+)-binding site is contributed by aspartate 218. A compositionally biased stretch (polar residues) spans 337–360 (VDQLHSPTLNPPLTMQKPSKSDQL). Disordered regions lie at residues 337–367 (VDQL…DSSK) and 523–546 (DPLL…TKRQ). Residues cysteine 594, cysteine 596, cysteine 619, and cysteine 631 each coordinate Zn(2+). Residues 594–640 (CKCGRRSKRLIVSNNGPNHGKAFYCCPVGKYQQDRKCCGYFKWEQTL) form a GRF-type zinc finger.

This sequence belongs to the ERI2 family. Mg(2+) serves as cofactor.

The sequence is that of ERI1 exoribonuclease 2 (Eri2) from Mus musculus (Mouse).